The chain runs to 87 residues: A-agglutinin-binding subunit (87 aa).

An N-terminal signal peptide occupies residues 1–18 (MQLLRCFSIFSVIASVLA). O-linked (Man...) threonine glycosylation occurs at Thr22. Ser30 is a glycosylation site (O-linked (Man...) serine). O-linked (Man...) threonine glycosylation occurs at Thr32. A glycan (O-linked (Man...) serine) is linked at Ser39. Thr63 carries O-linked (Man...) threonine glycosylation. Residue Ser66 is glycosylated (O-linked (Man...) serine). An O-linked (Man...) threonine glycan is attached at Thr75.

In terms of assembly, heterodimer; disulfide-linked. Interacts with SAG1.

Functionally, receptor binding subunit of the a-agglutinin heterodimer. S.cerevisiae a and alpha cells express the complementary cell surface glycoproteins a-agglutinin and alpha-agglutinin, respectively, which interact with one another to promote cellular aggregation during mating. The chain is A-agglutinin-binding subunit (AGA2) from Saccharomyces cerevisiae (strain ATCC 204508 / S288c) (Baker's yeast).